The following is a 132-amino-acid chain: UPF0292 protein PH1700 (132 aa).

A Toprim domain is found at 20–100 (EGAIIVEGAR…KVDTETRREL (81 aa)). 3 residues coordinate Mg(2+): Glu-26, Asp-69, and Asp-71.

Belongs to the UPF0292 family. Mg(2+) is required as a cofactor.

This chain is UPF0292 protein PH1700, found in Pyrococcus horikoshii (strain ATCC 700860 / DSM 12428 / JCM 9974 / NBRC 100139 / OT-3).